The primary structure comprises 224 residues: Phosphoribosylformylglycinamidine synthase subunit PurQ (224 aa).

Residues 2-224 enclose the Glutamine amidotransferase type-1 domain; that stretch reads TVAIIRFGGS…DGQGVLEGFR (223 aa). Cys-85 serves as the catalytic Nucleophile. Active-site residues include His-202 and Glu-204. Positions 204-224 are disordered; that stretch reads ERASLPDIGPTDGQGVLEGFR.

Part of the FGAM synthase complex composed of 1 PurL, 1 PurQ and 2 PurS subunits.

It localises to the cytoplasm. It carries out the reaction N(2)-formyl-N(1)-(5-phospho-beta-D-ribosyl)glycinamide + L-glutamine + ATP + H2O = 2-formamido-N(1)-(5-O-phospho-beta-D-ribosyl)acetamidine + L-glutamate + ADP + phosphate + H(+). The enzyme catalyses L-glutamine + H2O = L-glutamate + NH4(+). It participates in purine metabolism; IMP biosynthesis via de novo pathway; 5-amino-1-(5-phospho-D-ribosyl)imidazole from N(2)-formyl-N(1)-(5-phospho-D-ribosyl)glycinamide: step 1/2. Part of the phosphoribosylformylglycinamidine synthase complex involved in the purines biosynthetic pathway. Catalyzes the ATP-dependent conversion of formylglycinamide ribonucleotide (FGAR) and glutamine to yield formylglycinamidine ribonucleotide (FGAM) and glutamate. The FGAM synthase complex is composed of three subunits. PurQ produces an ammonia molecule by converting glutamine to glutamate. PurL transfers the ammonia molecule to FGAR to form FGAM in an ATP-dependent manner. PurS interacts with PurQ and PurL and is thought to assist in the transfer of the ammonia molecule from PurQ to PurL. This chain is Phosphoribosylformylglycinamidine synthase subunit PurQ, found in Natronomonas pharaonis (strain ATCC 35678 / DSM 2160 / CIP 103997 / JCM 8858 / NBRC 14720 / NCIMB 2260 / Gabara) (Halobacterium pharaonis).